The sequence spans 437 residues: Enolase-related protein 1 (437 aa).

The substrate site is built by H160 and E169. Catalysis depends on E212, which acts as the Proton donor. Mg(2+)-binding residues include D247, E296, and D321. Residues E296 and D321 each coordinate substrate. K346 serves as the catalytic Proton acceptor. Residues 373–376 (SHRS) and K397 each bind substrate.

This sequence belongs to the enolase family. Mg(2+) serves as cofactor.

It catalyses the reaction (2R)-2-phosphoglycerate = phosphoenolpyruvate + H2O. It participates in carbohydrate degradation; glycolysis; pyruvate from D-glyceraldehyde 3-phosphate: step 4/5. The sequence is that of Enolase-related protein 1 (ERR1) from Saccharomyces cerevisiae (strain ATCC 204508 / S288c) (Baker's yeast).